The following is a 1319-amino-acid chain: Uromodulin-like 1 (1319 aa).

The signal sequence occupies residues 1 to 22 (MMSRTVRLVLLALACTVDLSQA). Over 23–1273 (SGFTENGLSL…CTKPVLGTGY (1251 aa)) the chain is Extracellular. The 74-residue stretch at 34-107 (SYQLCSYPVT…FEQLGLYCVL (74 aa)) folds into the EMI domain. 3 disulfide bridges follow: Cys38-Cys95, Cys62-Cys71, and Cys94-Cys105. N-linked (GlcNAc...) asparagine glycosylation is present at Asn90. N-linked (GlcNAc...) asparagine glycosylation is present at Asn110. A WAP domain is found at 115-159 (FASRPGVCPTAEAEPLSPSCSLDTDCSGLQKCCSWPGGRHCVSPT). Residues Asn172, Asn193, and Asn243 are each glycosylated (N-linked (GlcNAc...) asparagine). Residues 265-306 (DVNECLHSELQACSVREQCRNLEGSYQCVSSQRLNHTDEDCP) form the EGF-like 1; calcium-binding domain. Disulfide bonds link Cys269-Cys283 and Cys277-Cys292. A Fibronectin type-III 1 domain is found at 307–391 (PIRDFVALNV…ATLVVKTDAQ (85 aa)). N-linked (GlcNAc...) asparagine glycosylation is present at Asn315. Positions 389 to 503 (DAQVFQVTIR…QRTFVQDWDE (115 aa)) constitute an SEA 1 domain. Residues 500 to 545 (DWDECAHSSEHDCHPSARCINLEGSYTCQCLTARDASPSRAGRVCE) form the EGF-like 2; calcium-binding domain. Disulfide bonds link Cys504–Cys518, Cys512–Cys527, and Cys529–Cys544. Disordered regions lie at residues 569–649 (TGIT…ITKD) and 664–703 (HSSP…PESP). A compositionally biased stretch (low complexity) spans 619 to 632 (TGQGQTHGTHQGTT). Residues 638–647 (TTRESQELIT) are compositionally biased toward basic and acidic residues. Residues 664-678 (HSSPTWKTPPNSTRL) show a composition bias toward polar residues. One can recognise a Fibronectin type-III 2 domain in the interval 709–795 (PIGKVTVSNV…QLKVRTVAQK (87 aa)). N-linked (GlcNAc...) asparagine glycans are attached at residues Asn717 and Asn757. The SEA 2 domain maps to 792–904 (VAQKLAGNVR…GKTFMQDYNE (113 aa)). The 45-residue stretch at 901 to 945 (DYNECDMKEDDCAPGTCRNTFGSFTCSCDEGGPDSQVEYSGRSCD) folds into the EGF-like 3; calcium-binding domain. 3 disulfides stabilise this stretch: Cys905–Cys917, Cys912–Cys926, and Cys928–Cys944. The interval 939–966 (YSGRSCDGDPSGNMTQTPGSEWSPTPAG) is disordered. Over residues 950-961 (GNMTQTPGSEWS) the composition is skewed to polar residues. Residue Asn951 is glycosylated (N-linked (GlcNAc...) asparagine). A ZP domain is found at 995–1238 (SCEIETVIIT…NSCRISCNDF (244 aa)). Cysteines 1160 and 1218 form a disulfide. A helical membrane pass occupies residues 1274–1294 (IILLAAAALLVVAGATTLLIL). Topologically, residues 1295–1319 (RYQRVRQKYNLRIQTDDFSYQVFSQ) are cytoplasmic.

The protein resides in the cell membrane. The polypeptide is Uromodulin-like 1 (Umodl1) (Mus musculus (Mouse)).